The sequence spans 49 residues: Large ribosomal subunit protein bL33 (49 aa).

Belongs to the bacterial ribosomal protein bL33 family.

The polypeptide is Large ribosomal subunit protein bL33 (Alkaliphilus oremlandii (strain OhILAs) (Clostridium oremlandii (strain OhILAs))).